A 77-amino-acid chain; its full sequence is Spermatid-specific protein T2 (77 aa).

Residues 1 to 21 (MKVAANTSKMLVEKLDLLKGG) form a hydrophobic region. A disordered region spans residues 1–77 (MKVAANTSKM…YSRRRYRRRR (77 aa)). Positions 20–77 (GGRRRRRRSRRRRRSRRRRSRSPYRRRYRRRRRRRRSRRRRRYRRRRSYSRRRYRRRR) are enriched in basic residues.

In terms of processing, phosphorylation occurs at different degrees. The triphosphorylated form may be predominant in T2. SP2 appears to be phosphorylated in elongated spermatids, but dephosphorylated in mature sperm cells. Testis.

It localises to the nucleus. The protein resides in the chromosome. In terms of biological role, cuttlefish spermiogenesis is characterized by a double nuclear protein transition: histones -&gt; spermatid-specific proteins (T1/T2) -&gt; protamines (SP1/SP2). The protamines compact sperm DNA into a highly condensed, stable and inactive complex. The chain is Spermatid-specific protein T2 from Sepia officinalis (Common cuttlefish).